Reading from the N-terminus, the 186-residue chain is Holliday junction branch migration complex subunit RuvA (186 aa).

The domain I stretch occupies residues 1 to 61 (MYSYIKGKVV…ENLQILYGFN (61 aa)). Residues 62–134 (DNKNLLFFKK…LKGDLIFSEK (73 aa)) form a domain II region. The flexible linker stretch occupies residues 134-135 (KI). Residues 136 to 186 (ILNPKKTELEKILLNLGFVKKEIKSVLNQIDDKKELELMLKEVLLKLAKNI) form a domain III region.

The protein belongs to the RuvA family. In terms of assembly, homotetramer. Forms an RuvA(8)-RuvB(12)-Holliday junction (HJ) complex. HJ DNA is sandwiched between 2 RuvA tetramers; dsDNA enters through RuvA and exits via RuvB. An RuvB hexamer assembles on each DNA strand where it exits the tetramer. Each RuvB hexamer is contacted by two RuvA subunits (via domain III) on 2 adjacent RuvB subunits; this complex drives branch migration. In the full resolvosome a probable DNA-RuvA(4)-RuvB(12)-RuvC(2) complex forms which resolves the HJ.

The protein resides in the cytoplasm. In terms of biological role, the RuvA-RuvB-RuvC complex processes Holliday junction (HJ) DNA during genetic recombination and DNA repair, while the RuvA-RuvB complex plays an important role in the rescue of blocked DNA replication forks via replication fork reversal (RFR). RuvA specifically binds to HJ cruciform DNA, conferring on it an open structure. The RuvB hexamer acts as an ATP-dependent pump, pulling dsDNA into and through the RuvAB complex. HJ branch migration allows RuvC to scan DNA until it finds its consensus sequence, where it cleaves and resolves the cruciform DNA. The sequence is that of Holliday junction branch migration complex subunit RuvA from Phytoplasma mali (strain AT).